A 694-amino-acid polypeptide reads, in one-letter code: Cyclic nucleotide-gated channel alpha-3 (694 aa).

Composition is skewed to polar residues over residues Met-1–Pro-11 and Ser-112–Ser-123. Disordered regions lie at residues Met-1 to Asp-24 and Glu-109 to Lys-152. Topologically, residues Met-1–Arg-170 are cytoplasmic. The helical transmembrane segment at Trp-171–Phe-192 threads the bilayer. Over Asp-193–Glu-198 the chain is Extracellular. The chain crosses the membrane as a helical span at residues Tyr-199–Leu-219. The Cytoplasmic segment spans residues Val-220–Thr-246. A helical transmembrane segment spans residues Thr-247–Val-266. At Gly-267–Tyr-270 the chain is on the extracellular side. Residues Pro-271–Phe-288 form a helical membrane-spanning segment. At Asp-289–Pro-298 the chain is on the cytoplasmic side. The ion conduction pathway stretch occupies residues Pro-298–Met-406. The chain crosses the membrane as a helical span at residues Asn-299 to Tyr-321. The Extracellular portion of the chain corresponds to Phe-322–Arg-347. The N-linked (GalNAc...) asparagine glycan is linked to Asn-339. 2 helical membrane-spanning segments follow: residues Leu-348–Tyr-378 and Leu-379–Ile-403. The tract at residues Thr-365–Glu-368 is selectivity filter. Residues Ser-404–Gln-694 lie on the Cytoplasmic side of the membrane. Residues Ala-408 to Asp-485 form a C-linker region. Residues Ala-488–Lys-608 form a cyclic nucleotide-binding domain region. 6 residues coordinate 3',5'-cyclic GMP: Gly-548, Glu-549, Ser-551, Arg-564, Thr-565, and Asp-609. A coiled-coil region spans residues Leu-626–Val-669. Residues Leu-662–Gln-694 form a disordered region.

This sequence belongs to the cyclic nucleotide-gated cation channel (TC 1.A.1.5) family. CNGA3 subfamily. In terms of assembly, forms heterotetrameric channels composed of CNGA3 and CNGB3 subunits with 3:1 stoichiometry. In terms of tissue distribution, prominently expressed in retina.

The protein resides in the cell membrane. The enzyme catalyses Ca(2+)(in) = Ca(2+)(out). It carries out the reaction Na(+)(in) = Na(+)(out). The catalysed reaction is K(+)(in) = K(+)(out). It catalyses the reaction NH4(+)(in) = NH4(+)(out). The enzyme catalyses Rb(+)(in) = Rb(+)(out). It carries out the reaction Li(+)(in) = Li(+)(out). The catalysed reaction is Cs(+)(in) = Cs(+)(out). With respect to regulation, inhibited by L-cis-diltiazem. Its function is as follows. Pore-forming subunit of the cone cyclic nucleotide-gated channel. Mediates cone photoresponses at bright light converting transient changes in intracellular cGMP levels into electrical signals. In the dark, cGMP levels are high and keep the channel open enabling a steady inward current carried by Na(+) and Ca(2+) ions that leads to membrane depolarization and neurotransmitter release from synaptic terminals. Upon photon absorption cGMP levels decline leading to channel closure and membrane hyperpolarization that ultimately slows neurotransmitter release and signals the presence of light, the end point of the phototransduction cascade. Pore-forming subunit of the gustatory cyclic nucleotide-gated channel. In the taste buds, may sense oral extracellular pH and conduct ion currents that modulate the excitability of taste cells. Conducts cGMP- and cAMP-gated ion currents, with permeability for monovalent and divalent cations. This Homo sapiens (Human) protein is Cyclic nucleotide-gated channel alpha-3.